A 535-amino-acid polypeptide reads, in one-letter code: Alpha-1,3-mannosyl-glycoprotein 4-beta-N-acetylglucosaminyltransferase A (535 aa).

Topologically, residues 1–6 (MRLRNG) are cytoplasmic. The chain crosses the membrane as a helical; Signal-anchor for type II membrane protein span at residues 7 to 27 (TVATVLAFITSFLTLSWYTTW). Topologically, residues 28–535 (QNGKEKVIAY…NEIHIKKVTN (508 aa)) are lumenal. Positions 31-57 (KEKVIAYQREFLALKERLRIAEHRISQ) form a coiled coil. 2 N-linked (GlcNAc...) asparagine glycosylation sites follow: Asn77 and Asn458. Residue Ser474 is modified to Phosphoserine.

Belongs to the glycosyltransferase 54 family. A divalent metal cation is required as a cofactor. N-glycosylated. Highly expressed in small intestine, kidney, lung and spleen. Weakly expressed in brain, heart and liver.

It is found in the golgi apparatus membrane. Its subcellular location is the secreted. It catalyses the reaction N(4)-{beta-D-GlcNAc-(1-&gt;2)-alpha-D-Man-(1-&gt;3)-[beta-D-GlcNAc-(1-&gt;2)-alpha-D-Man-(1-&gt;6)]-beta-D-Man-(1-&gt;4)-beta-D-GlcNAc-(1-&gt;4)-beta-D-GlcNAc}-L-asparaginyl-[protein] + UDP-N-acetyl-alpha-D-glucosamine = N(4)-{beta-D-GlcNAc-(1-&gt;2)-[beta-D-GlcNAc-(1-&gt;4)]-alpha-D-Man-(1-&gt;3)-[beta-D-GlcNAc-(1-&gt;2)-alpha-D-Man-(1-&gt;6)]-beta-D-Man-(1-&gt;4)-beta-D-GlcNAc-(1-&gt;4)-beta-D-GlcNAc}-L-asparaginyl-[protein] + UDP + H(+). The catalysed reaction is an N(4)-{beta-D-GlcNAc-(1-&gt;2)-alpha-D-Man-(1-&gt;3)-[alpha-D-Man-(1-&gt;6)]-beta-D-Man-(1-&gt;4)-beta-D-GlcNAc-(1-&gt;4)-beta-D-GlcNAc}-L-asparaginyl-[protein] + UDP-N-acetyl-alpha-D-glucosamine = an N(4)-{beta-D-GlcNAc-(1-&gt;2)-[beta-D-GlcNAc-(1-&gt;4)]-alpha-D-Man-(1-&gt;3)-[alpha-D-Man-(1-&gt;6)]-beta-D-Man-(1-&gt;4)-beta-D-GlcNAc-(1-&gt;4)-beta-D-GlcNAc}-L-asparaginyl-[protein] + UDP + H(+). It carries out the reaction an N(4)-{beta-D-GlcNAc-(1-&gt;2)-alpha-D-Man-(1-&gt;3)-[beta-D-GlcNAc-(1-&gt;2)-[beta-D-GlcNAc-(1-&gt;6)]-alpha-D-Man-(1-&gt;6)]-beta-D-Man-(1-&gt;4)-beta-D-GlcNAc-(1-&gt;4)-beta-D-GlcNAc}-L-asparaginyl-[protein] + UDP-N-acetyl-alpha-D-glucosamine = an N(4)-{beta-D-GlcNAc-(1-&gt;2)-[beta-D-GlcNAc-(1-&gt;4)]-alpha-D-Man-(1-&gt;3)-[beta-D-GlcNAc-(1-&gt;2)-[beta-D-GlcNAc-(1-&gt;6)]-alpha-D-Man-(1-&gt;6)]-beta-D-Man-(1-&gt;4)-beta-D-GlcNAc-(1-&gt;4)-beta-D-GlcNAc}-L-asparaginyl-[protein] + UDP + H(+). The enzyme catalyses an N(4)-{beta-D-GlcNAc-(1-&gt;2)-alpha-D-Man-(1-&gt;3)-[beta-D-GlcNAc-(1-&gt;2)-alpha-D-Man-(1-&gt;6)]-beta-D-Man-(1-&gt;4)-beta-D-GlcNAc-(1-&gt;4)-[alpha-L-Fuc-(1-&gt;6)]-beta-D-GlcNAc}-L-asparaginyl-[protein] + UDP-N-acetyl-alpha-D-glucosamine = N(4)-{beta-D-GlcNAc-(1-&gt;2)-[beta-D-GlcNAc-(1-&gt;4)]-alpha-D-Man-(1-&gt;3)-[beta-D-GlcNAc-(1-&gt;2)-alpha-D-Man-(1-&gt;6)]-beta-D-Man-(1-&gt;4)-beta-D-GlcNAc-(1-&gt;4)-[alpha-L-Fuc-(1-&gt;6)]-beta-D-GlcNAc}-asparaginyl-[protein] + UDP + H(+). It catalyses the reaction an N(4)-{beta-D-GlcNAc-(1-&gt;2)-alpha-D-Man-(1-&gt;3)-[beta-D-Gal-(1-&gt;4)-beta-D-GlcNAc-(1-&gt;2)-alpha-D-Man-(1-&gt;6)]-beta-D-Man-(1-&gt;4)-beta-D-GlcNAc-(1-&gt;4)-beta-D-GlcNAc}-L-asparaginyl-[protein] + UDP-N-acetyl-alpha-D-glucosamine = an N(4)-{beta-D-GlcNAc-(1-&gt;2)-[beta-D-GlcNAc-(1-&gt;4)]-alpha-D-Man-(1-&gt;3)-[beta-D-Gal-(1-&gt;4)-beta-D-GlcNAc-(1-&gt;2)-alpha-D-Man-(1-&gt;6)]-beta-D-Man-(1-&gt;4)-beta-D-GlcNAc-(1-&gt;4)-beta-D-GlcNAc}-L-asparaginyl-[protein] + UDP + H(+). The catalysed reaction is N(4)-{beta-D-GlcNAc-(1-&gt;2)-alpha-D-Man-(1-&gt;3)-[alpha-D-Man-(1-&gt;3)-{alpha-D-Man-(1-&gt;6)}-alpha-D-Man-(1-&gt;6)]-beta-D-Man-(1-&gt;4)-beta-D-GlcNAc-(1-&gt;4)-beta-D-GlcNAc}-asparaginyl-[protein] + UDP-N-acetyl-alpha-D-glucosamine = N(4)-{beta-D-GlcNAc-(1-&gt;2)-[beta-D-GlcNAc-(1-&gt;4)]-alpha-D-Man-(1-&gt;3)-[alpha-D-Man-(1-&gt;3)-{alpha-D-Man-(1-&gt;6)}-alpha-D-Man-(1-&gt;6)]-beta-D-Man-(1-&gt;4)-beta-D-GlcNAc-(1-&gt;4)-beta-D-GlcNAc}-asparaginyl-[protein] + UDP + H(+). It carries out the reaction N(4)-{beta-D-GlcNAc-(1-&gt;2)-alpha-D-Man-(1-&gt;3)-beta-D-Man-(1-&gt;4)-beta-D-GlcNAc-(1-&gt;4)-beta-D-GlcNAc}-asparaginyl-[protein] + UDP-N-acetyl-alpha-D-glucosamine = N(4)-{beta-D-GlcNAc-(1-&gt;2)-[beta-D-GlcNAc-(1-&gt;4)]-alpha-D-Man-(1-&gt;3)-beta-D-Man-(1-&gt;4)-beta-D-GlcNAc-(1-&gt;4)-beta-D-GlcNAc}-asparaginyl-[protein] + UDP + H(+). It participates in protein modification; protein glycosylation. Inhibited by UDP. Glycosyltransferase that catalyze the transfer of GlcNAc from UDP-GlcNAc to the GlcNAcbeta1-2Manalpha1-3 arm of the core structure of N-linked glycans through a beta1-4 linkage and participates in the production of tri- and tetra-antennary N-linked sugar chains. Involved in glucose transport by mediating SLC2A2/GLUT2 glycosylation, thereby controlling cell-surface expression of SLC2A2 in pancreatic beta cells. The chain is Alpha-1,3-mannosyl-glycoprotein 4-beta-N-acetylglucosaminyltransferase A from Bos taurus (Bovine).